Consider the following 117-residue polypeptide: Ribosome-binding factor A (117 aa).

It belongs to the RbfA family. As to quaternary structure, monomer. Binds 30S ribosomal subunits, but not 50S ribosomal subunits or 70S ribosomes.

It localises to the cytoplasm. In terms of biological role, one of several proteins that assist in the late maturation steps of the functional core of the 30S ribosomal subunit. Associates with free 30S ribosomal subunits (but not with 30S subunits that are part of 70S ribosomes or polysomes). Required for efficient processing of 16S rRNA. May interact with the 5'-terminal helix region of 16S rRNA. This is Ribosome-binding factor A from Anaplasma marginale (strain St. Maries).